The following is a 707-amino-acid chain: D-(-)-3-hydroxybutyrate oligomer hydrolase (707 aa).

The N-terminal stretch at 1 to 24 (MHHDNFRRLGNAAFAAAAALLAVA) is a signal peptide. The active-site Charge relay system is the serine 311.

Belongs to the D-(-)-3-hydroxybutyrate oligomer hydrolase family.

Its subcellular location is the secreted. It carries out the reaction (3R)-hydroxybutanoate dimer + H2O = 2 (R)-3-hydroxybutanoate + H(+). It functions in the pathway lipid metabolism; butanoate metabolism. Its function is as follows. Participates in the degradation of poly-3-hydroxybutyrate (PHB). It works downstream of poly(3-hydroxybutyrate) depolymerase, hydrolyzing D(-)-3-hydroxybutyrate oligomers of various length (3HB-oligomers) into 3HB-monomers. This chain is D-(-)-3-hydroxybutyrate oligomer hydrolase, found in Cupriavidus pinatubonensis (strain JMP 134 / LMG 1197) (Cupriavidus necator (strain JMP 134)).